We begin with the raw amino-acid sequence, 447 residues long: NADH peroxidase (447 aa).

Residues 7 to 11, E32, C42, 110 to 113, and R132 contribute to the FAD site; these read GSSHG and SPGA. The active-site Proton acceptor is H10. C42 functions as the Redox-active in the catalytic mechanism. C42 carries the post-translational modification Cysteine sulfenic acid (-SOH). I160, D179, Y188, and G243 together coordinate NAD(+). D281 is an FAD binding site. A297 serves as a coordination point for NAD(+). FAD is bound at residue A299. An NAD(+)-binding site is contributed by G328.

The protein belongs to the class-III pyridine nucleotide-disulfide oxidoreductase family. In terms of assembly, homotetramer. FAD serves as cofactor.

The catalysed reaction is H2O2 + NADH + H(+) = NAD(+) + 2 H2O. Functionally, peroxidase whose active site is a redox-active cysteine-sulfenic acid. In Enterococcus faecalis (strain ATCC 700802 / V583), this protein is NADH peroxidase (npr).